Consider the following 133-residue polypeptide: Large ribosomal subunit protein uL14 (133 aa).

This sequence belongs to the universal ribosomal protein uL14 family. In terms of assembly, part of the 50S ribosomal subunit. Forms a cluster with proteins L3 and L24e, part of which may contact the 16S rRNA in 2 intersubunit bridges.

In terms of biological role, binds to 23S rRNA. Forms part of two intersubunit bridges in the 70S ribosome. This chain is Large ribosomal subunit protein uL14, found in Nanoarchaeum equitans (strain Kin4-M).